Here is a 156-residue protein sequence, read N- to C-terminus: SsrA-binding protein (156 aa).

Belongs to the SmpB family.

It localises to the cytoplasm. Functionally, required for rescue of stalled ribosomes mediated by trans-translation. Binds to transfer-messenger RNA (tmRNA), required for stable association of tmRNA with ribosomes. tmRNA and SmpB together mimic tRNA shape, replacing the anticodon stem-loop with SmpB. tmRNA is encoded by the ssrA gene; the 2 termini fold to resemble tRNA(Ala) and it encodes a 'tag peptide', a short internal open reading frame. During trans-translation Ala-aminoacylated tmRNA acts like a tRNA, entering the A-site of stalled ribosomes, displacing the stalled mRNA. The ribosome then switches to translate the ORF on the tmRNA; the nascent peptide is terminated with the 'tag peptide' encoded by the tmRNA and targeted for degradation. The ribosome is freed to recommence translation, which seems to be the essential function of trans-translation. This Clostridium botulinum (strain Alaska E43 / Type E3) protein is SsrA-binding protein.